Consider the following 204-residue polypeptide: uncharacterized protein (204 aa).

Positions 109–136 form a coiled coil; it reads QFDIDVHKDQIEKLKDLYKALLRIAETT.

This is an uncharacterized protein from Bacillus subtilis (strain 168).